The following is a 472-amino-acid chain: 3-isopropylmalate dehydratase large subunit (472 aa).

[4Fe-4S] cluster-binding residues include Cys353, Cys414, and Cys417.

Belongs to the aconitase/IPM isomerase family. LeuC type 1 subfamily. Heterodimer of LeuC and LeuD. [4Fe-4S] cluster is required as a cofactor.

The catalysed reaction is (2R,3S)-3-isopropylmalate = (2S)-2-isopropylmalate. It functions in the pathway amino-acid biosynthesis; L-leucine biosynthesis; L-leucine from 3-methyl-2-oxobutanoate: step 2/4. Functionally, catalyzes the isomerization between 2-isopropylmalate and 3-isopropylmalate, via the formation of 2-isopropylmaleate. In Psychrobacter arcticus (strain DSM 17307 / VKM B-2377 / 273-4), this protein is 3-isopropylmalate dehydratase large subunit.